A 586-amino-acid chain; its full sequence is Arginine--tRNA ligase (586 aa).

Positions 131–141 match the 'HIGH' region motif; it reads ANPTGPLHVGH.

The protein belongs to the class-I aminoacyl-tRNA synthetase family. As to quaternary structure, monomer.

Its subcellular location is the cytoplasm. The catalysed reaction is tRNA(Arg) + L-arginine + ATP = L-arginyl-tRNA(Arg) + AMP + diphosphate. The polypeptide is Arginine--tRNA ligase (Nitrosomonas eutropha (strain DSM 101675 / C91 / Nm57)).